Here is a 278-residue protein sequence, read N- to C-terminus: Probable aquaporin PIP2-8 (278 aa).

Met-1 is subject to N-acetylmethionine. Residues 1–36 are Cytoplasmic-facing; that stretch reads MSKEVSEEGRHGKDYVDPPPAPLLDMAELKLWSFYR. Lys-3 is subject to N6,N6-dimethyllysine. The chain crosses the membrane as a helical span at residues 37–57; it reads AIIAEFIATLLFLYVTVATVI. At 58 to 74 the chain is on the extracellular side; that stretch reads GHKNQTGPCGGVGLLGI. The helical transmembrane segment at 75–95 threads the bilayer; sequence AWAFGGMIFVLVYCTAGISGG. Topologically, residues 96 to 116 are cytoplasmic; it reads HINPAVTFGLFLARKVSLPRA. An NPA 1 motif is present at residues 98–100; the sequence is NPA. The helical transmembrane segment at 117–137 threads the bilayer; the sequence is VAYMVAQCLGAICGVGLVKAF. Residues 138 to 158 are Extracellular-facing; it reads MMTPYKRLGGGANTVADGYST. Residues 159 to 179 traverse the membrane as a helical segment; the sequence is GTALGAEIIGTFVLVYTVFSA. The Cytoplasmic segment spans residues 180–192; the sequence is TDPKRSARDSHVP. The helical transmembrane segment at 193–213 threads the bilayer; it reads VLAPLPIGFAVFMVHLATIPI. Over 214–240 the chain is Extracellular; it reads TGTGINPARSFGAAVIYNNEKAWDDHW. The NPA 2 motif lies at 219–221; sequence NPA. A helical membrane pass occupies residues 241 to 261; the sequence is IFWVGPFVGALAAAAYHQYIL. The Cytoplasmic portion of the chain corresponds to 262-278; sequence RAAAIKALASFRSNPTN. Phosphoserine is present on residues Ser-271 and Ser-274.

This sequence belongs to the MIP/aquaporin (TC 1.A.8) family. PIP (TC 1.A.8.11) subfamily. Expressed in roots and floral buds.

Its subcellular location is the cell membrane. Aquaporins facilitate the transport of water and small neutral solutes across cell membranes. This Arabidopsis thaliana (Mouse-ear cress) protein is Probable aquaporin PIP2-8 (PIP2-8).